A 382-amino-acid polypeptide reads, in one-letter code: 4-hydroxy-3-methylbut-2-en-1-yl diphosphate synthase (flavodoxin) (382 aa).

4 residues coordinate [4Fe-4S] cluster: Cys273, Cys276, Cys308, and Glu315.

Belongs to the IspG family. [4Fe-4S] cluster is required as a cofactor.

The catalysed reaction is (2E)-4-hydroxy-3-methylbut-2-enyl diphosphate + oxidized [flavodoxin] + H2O + 2 H(+) = 2-C-methyl-D-erythritol 2,4-cyclic diphosphate + reduced [flavodoxin]. The protein operates within isoprenoid biosynthesis; isopentenyl diphosphate biosynthesis via DXP pathway; isopentenyl diphosphate from 1-deoxy-D-xylulose 5-phosphate: step 5/6. Functionally, converts 2C-methyl-D-erythritol 2,4-cyclodiphosphate (ME-2,4cPP) into 1-hydroxy-2-methyl-2-(E)-butenyl 4-diphosphate. In Gluconacetobacter diazotrophicus (strain ATCC 49037 / DSM 5601 / CCUG 37298 / CIP 103539 / LMG 7603 / PAl5), this protein is 4-hydroxy-3-methylbut-2-en-1-yl diphosphate synthase (flavodoxin).